Here is a 387-residue protein sequence, read N- to C-terminus: Protein mab-21-like 3 (387 aa).

This sequence belongs to the mab-21 family.

This Danio rerio (Zebrafish) protein is Protein mab-21-like 3 (mab21L3).